The sequence spans 307 residues: Potassium channel subfamily K member 7 (307 aa).

Over 1-10 the chain is Cytoplasmic; the sequence is MGGLRPWSRY. Residues 11-31 form a helical membrane-spanning segment; the sequence is GLLVVAHLLALGLGAVVFQAL. Asn83 carries N-linked (GlcNAc...) asparagine glycosylation. The pore-forming intramembrane region spans 92–119; the sequence is LPSALLFAASILTTTGYGHMAPLSPGGK. A helical transmembrane segment spans residues 120 to 140; it reads AFCMVYAALGLPASLALVATL. Over 141–170 the chain is Cytoplasmic; the sequence is RHCLLPVLSRPRAWVAVHWQLSPARAALLQ. The chain crosses the membrane as a helical span at residues 171–191; the sequence is AVALGLLVASSFVLLPALVLW. An intramembrane region (pore-forming) is located at residues 199 to 227; that stretch reads LLGAVYFCFSSLSTIGLEDLLPGRGRSLH. A helical membrane pass occupies residues 233 to 253; the sequence is LGQLALLGYLLLGLLAMLLAV. Topologically, residues 254-307 are cytoplasmic; the sequence is ETFSELPQVRAMGKFFRPSGPVTAEDQGGILGQDELALSTLPPAAPASGQAPAC.

It belongs to the two pore domain potassium channel (TC 1.A.1.8) family. In terms of assembly, homodimer.

Its subcellular location is the membrane. Its function is as follows. Probable potassium channel subunit. No channel activity observed in vitro as protein remains in the endoplasmic reticulum. May need to associate with an as yet unknown partner in order to reach the plasma membrane. The polypeptide is Potassium channel subfamily K member 7 (KCNK7) (Homo sapiens (Human)).